A 492-amino-acid polypeptide reads, in one-letter code: Catalase isozyme 3 (492 aa).

Catalysis depends on residues His-65 and Asn-138. Position 347 (Tyr-347) interacts with heme.

It belongs to the catalase family. Homotetramer. Heme is required as a cofactor. Abundant in green cotyledons, etiolated cotyledons, green hypocotyl and root, but not in young leaf.

The protein resides in the peroxisome. It carries out the reaction 2 H2O2 = O2 + 2 H2O. In terms of biological role, occurs in almost all aerobically respiring organisms and serves to protect cells from the toxic effects of hydrogen peroxide. The polypeptide is Catalase isozyme 3 (CAT3) (Cucurbita pepo (Vegetable marrow)).